The chain runs to 451 residues: MRMAHVADVHLGHALMNLRSREEAVMETFERLMEEVRECSVDVLVIAGDLFEHARPKTEALYLAVEKLSELKEDGVEIVATAGNHEIRRRKGAVSPISVLERMGLVRHLYYSERRPERHRYTATFDGVRVTFHGLQYLPKNSFVERAKVIRAKYRPDPEADVNVAIFHQALPGTIPDESEIVEPAYFPEGHDYYAMGHVHVPSREEKIHGSPAPYPGSPEPLTFLEVKDERGAHKRRGFFLVEFDRGGLVEYEFVEVEWSRELSVVEVSGERWEEELRRRVRRGQIVKVVAKDTGASPEEVEKVAIEAGADRCVVELRERRREVEEGDETEGPLDLEGIIREGVKRARAATLTRVDVPDDVVVEVALEILRGVREDNPPDLGDVEGIVAGEPPSEGSEESSEEPEESDGEEVGLEVEEVKVESRGTSSEGMSRAGSKLGSSGRPSLDRWIG.

Mn(2+) is bound by residues aspartate 8, histidine 10, aspartate 49, and asparagine 84. Histidine 85 (proton donor) is an active-site residue. Residues histidine 168, histidine 198, and histidine 200 each contribute to the Mn(2+) site. Residues 374-451 (REDNPPDLGD…GRPSLDRWIG (78 aa)) form a disordered region. Acidic residues predominate over residues 396-416 (GSEESSEEPEESDGEEVGLEV).

The protein belongs to the MRE11/RAD32 family. In terms of assembly, homodimer. Forms a heterotetramer composed of two Mre11 subunits and two Rad50 subunits. It depends on Mn(2+) as a cofactor.

With respect to regulation, nuclease activity is regulated by Rad50. In terms of biological role, part of the Rad50/Mre11 complex, which is involved in the early steps of DNA double-strand break (DSB) repair. The complex may facilitate opening of the processed DNA ends to aid in the recruitment of HerA and NurA. Mre11 binds to DSB ends and has both double-stranded 3'-5' exonuclease activity and single-stranded endonuclease activity. The sequence is that of DNA double-strand break repair protein Mre11 from Methanopyrus kandleri (strain AV19 / DSM 6324 / JCM 9639 / NBRC 100938).